A 475-amino-acid polypeptide reads, in one-letter code: Sulfate adenylyltransferase subunit 1 (475 aa).

One can recognise a tr-type G domain in the interval 25–239; the sequence is KSLLRFLTCG…EVLETVEIQR (215 aa). The tract at residues 34 to 41 is G1; the sequence is GSVDDGKS. 34–41 is a GTP binding site; that stretch reads GSVDDGKS. The interval 92–96 is G2; it reads GITID. The tract at residues 113–116 is G3; that stretch reads DTPG. GTP-binding positions include 113 to 117 and 168 to 171; these read DTPGH and NKMD. Residues 168 to 171 form a G4 region; sequence NKMD. Positions 206–208 are G5; it reads SAL.

This sequence belongs to the TRAFAC class translation factor GTPase superfamily. Classic translation factor GTPase family. CysN/NodQ subfamily. As to quaternary structure, heterodimer composed of CysD, the smaller subunit, and CysN.

The catalysed reaction is sulfate + ATP + H(+) = adenosine 5'-phosphosulfate + diphosphate. It participates in sulfur metabolism; hydrogen sulfide biosynthesis; sulfite from sulfate: step 1/3. Its function is as follows. With CysD forms the ATP sulfurylase (ATPS) that catalyzes the adenylation of sulfate producing adenosine 5'-phosphosulfate (APS) and diphosphate, the first enzymatic step in sulfur assimilation pathway. APS synthesis involves the formation of a high-energy phosphoric-sulfuric acid anhydride bond driven by GTP hydrolysis by CysN coupled to ATP hydrolysis by CysD. The sequence is that of Sulfate adenylyltransferase subunit 1 from Escherichia coli O127:H6 (strain E2348/69 / EPEC).